The sequence spans 131 residues: MSEIPGDLKFLKSHEWARVESNGRVTVGISDHAQGLLGDLVYVELPGVGDTVQVGNGAAVVESVKAASDVYSPVSGTVVEVNSALSDKPETINEDAYGEGWIFVVEIDDKEQLNDLLDPDDYAELLEDDDH.

Positions 24–106 (RVTVGISDHA…YGEGWIFVVE (83 aa)) constitute a Lipoyl-binding domain. Lys65 is modified (N6-lipoyllysine).

The protein belongs to the GcvH family. As to quaternary structure, the glycine cleavage system is composed of four proteins: P, T, L and H. Requires (R)-lipoate as cofactor.

Functionally, the glycine cleavage system catalyzes the degradation of glycine. The H protein shuttles the methylamine group of glycine from the P protein to the T protein. The polypeptide is Glycine cleavage system H protein (Xanthomonas axonopodis pv. citri (strain 306)).